The sequence spans 164 residues: Putative deoxyuridine 5'-triphosphate nucleotidohydrolase (164 aa).

65 to 67 (RSG) is a binding site for substrate. Lysine 71 bears the N6-acetyllysine; by host mark. Residues 79–82 (GVVD), glycine 90, and 138–139 (YG) each bind substrate.

This sequence belongs to the dUTPase family. Requires Mg(2+) as cofactor.

The enzyme catalyses dUTP + H2O = dUMP + diphosphate + H(+). In terms of biological role, this enzyme is involved in nucleotide metabolism: it produces dUMP, the immediate precursor of thymidine nucleotides and it decreases the intracellular concentration of dUTP so that uracil cannot be incorporated into DNA. The chain is Putative deoxyuridine 5'-triphosphate nucleotidohydrolase from Dryophytes versicolor (chameleon treefrog).